A 616-amino-acid polypeptide reads, in one-letter code: tRNA uridine 5-carboxymethylaminomethyl modification enzyme MnmG (616 aa).

Residues 10 to 15 (GAGHAG), valine 122, and serine 177 contribute to the FAD site. Residue 271-285 (GPRYCPSIEDKVVRF) participates in NAD(+) binding. Glutamine 368 contributes to the FAD binding site.

Belongs to the MnmG family. As to quaternary structure, homodimer. Heterotetramer of two MnmE and two MnmG subunits. The cofactor is FAD.

The protein resides in the cytoplasm. Functionally, NAD-binding protein involved in the addition of a carboxymethylaminomethyl (cmnm) group at the wobble position (U34) of certain tRNAs, forming tRNA-cmnm(5)s(2)U34. The polypeptide is tRNA uridine 5-carboxymethylaminomethyl modification enzyme MnmG (Malacoplasma penetrans (strain HF-2) (Mycoplasma penetrans)).